We begin with the raw amino-acid sequence, 252 residues long: CLAVATA3/ESR (CLE)-related protein 4A-1 (252 aa).

An N-terminal signal peptide occupies residues 1 to 21; sequence MAKNAMLCLLILRVVLALAFA. Residues 21 to 83 form a required for secretion from the host cytoplasm to the host apoplasm region; the sequence is ATNKKGDEEP…SNQLPNNNWM (63 aa). Residue Asn32 is glycosylated (N-linked (GlcNAc...) asparagine). Residues 116–252 form a disordered region; the sequence is RKTGMHSQRH…APAGPDPIHH (137 aa). 2 stretches are compositionally biased toward basic and acidic residues: residues 125-137 and 144-242; these read HHEE…EKRV and PIHH…EKRG. The stretch at 127 to 135 is one A-1 repeat; that stretch reads EETTLEQEK. A 6 X approximate repeat A region spans residues 127 to 219; that stretch reads EETTLEQEKR…HEETTLEQEK (93 aa). The stretch at 136 to 147 is one CLE-1 repeat; it reads RVAGAGPDPIHH. The interval 136-252 is 6 X approximate repeat CLE; sequence RVAGAGPDPI…APAGPDPIHH (117 aa). Residues 148-156 form an A-2 repeat; sequence QDTTLEQEK. One copy of the CLE-2 repeat lies at 157-168; it reads RAVPAGPDPKHH. The A-3 repeat unit spans residues 169–177; sequence EETTLEQEK. The CLE-3 repeat unit spans residues 178–189; the sequence is RAVPAGPDPKHH. The A-4 repeat unit spans residues 190–198; sequence EETTLEQEK. The CLE-4 repeat unit spans residues 199-210; the sequence is RAVPAGPDPKHH. One copy of the A-5 repeat lies at 211–219; the sequence is EETTLEQEK. The stretch at 220–231 is one CLE-5 repeat; the sequence is RAVPAGPDPKHH. The A-6 repeat unit spans residues 232–240; the sequence is EETTFEQEK. Residues 241 to 252 form a CLE-6 repeat; the sequence is RGAPAGPDPIHH.

Belongs to the CLV3/ESR signal peptide family. As to expression, highly expressed exclusively within the dorsal esophageal gland cell during syncytium formation in host plants.

The protein resides in the secreted. It is found in the host cytoplasm. Its subcellular location is the host extracellular space. It localises to the extracellular space. The protein localises to the apoplast. Mimics host plant CLE extracellular signal peptides that regulate cell fate. May play a role in the differentiation or division of feeding cells (syncytia) induced in plant roots during infection. The sequence is that of CLAVATA3/ESR (CLE)-related protein 4A-1 (CLE-4A-1) from Globodera rostochiensis (Golden nematode worm).